Consider the following 583-residue polypeptide: MNNRQITTLWSTLLVEALIRQGVDFFCISPGSRSTPLTIAAARNPRARTKLFADERSAAFFALGYARATEMVAPLICTSGTAVANYFPAVVEASMDFQPMLIISADRPFELLECGANQTIRQEHIFGSYTRWSMQLPTPSVEVPLTSLLSTVEYAVAKALNTPAGVVHLNQPFREPFEPESVAANNHAWWQSAQQWLASKAAHTTTTVEKKHPNNASITLLRQHLTTAKQPLLIAGSMRCKDDAEAVAALANNLKIPLYADFSSGLRMKSNLPPLQLLMQSPAWRAAFHPDVVLHFGGNVVAKHLATALREWQPAHYMVVREEPMRFSPDHNVTHRLEASIAATAHALHNSRSTPLWRESEADHFFAQAAQELEGDVVADQPITEISAARLISRHIGTEQALFVSNSMAVRDMDMYAASLHEAGIPTAINRGASGIDGILSTAAGFACGHGKSTTLLIGDIAFLHDLNALSLLGSLTVPLQIVLLNNNGGGIFSFLPIAACDDLFETYFATPQHYSIPLAAETFGLHYANPTTNSEFVAAYHQAQQSPQSTIIEVKSSRTNNLQHHRLLNARLQAIAAKLFNG.

It belongs to the TPP enzyme family. MenD subfamily. As to quaternary structure, homodimer. Mg(2+) serves as cofactor. Mn(2+) is required as a cofactor. It depends on thiamine diphosphate as a cofactor.

The enzyme catalyses isochorismate + 2-oxoglutarate + H(+) = 5-enolpyruvoyl-6-hydroxy-2-succinyl-cyclohex-3-ene-1-carboxylate + CO2. Its pathway is quinol/quinone metabolism; 1,4-dihydroxy-2-naphthoate biosynthesis; 1,4-dihydroxy-2-naphthoate from chorismate: step 2/7. The protein operates within quinol/quinone metabolism; menaquinone biosynthesis. Functionally, catalyzes the thiamine diphosphate-dependent decarboxylation of 2-oxoglutarate and the subsequent addition of the resulting succinic semialdehyde-thiamine pyrophosphate anion to isochorismate to yield 2-succinyl-5-enolpyruvyl-6-hydroxy-3-cyclohexene-1-carboxylate (SEPHCHC). The protein is 2-succinyl-5-enolpyruvyl-6-hydroxy-3-cyclohexene-1-carboxylate synthase of Chlorobium chlorochromatii (strain CaD3).